The chain runs to 172 residues: Putative phosphoesterase BCE_1348 (172 aa).

The Proton donor role is filled by H34. 2 consecutive short sequence motifs (HXTX) follow at residues 34–37 (HITL) and 115–118 (HLTI). H115 functions as the Proton acceptor in the catalytic mechanism.

This sequence belongs to the 2H phosphoesterase superfamily. YjcG family.

The protein is Putative phosphoesterase BCE_1348 of Bacillus cereus (strain ATCC 10987 / NRS 248).